We begin with the raw amino-acid sequence, 530 residues long: Autoinducer-2 kinase (530 aa).

The protein belongs to the FGGY kinase family.

The protein resides in the cytoplasm. It carries out the reaction (S)-4,5-dihydroxypentane-2,3-dione + ATP = (2S)-2-hydroxy-3,4-dioxopentyl phosphate + ADP + H(+). Functionally, catalyzes the phosphorylation of autoinducer-2 (AI-2) to phospho-AI-2, which subsequently inactivates the transcriptional regulator LsrR and leads to the transcription of the lsr operon. Phosphorylates the ring-open form of (S)-4,5-dihydroxypentane-2,3-dione (DPD), which is the precursor to all AI-2 signaling molecules, at the C5 position. The protein is Autoinducer-2 kinase of Photorhabdus laumondii subsp. laumondii (strain DSM 15139 / CIP 105565 / TT01) (Photorhabdus luminescens subsp. laumondii).